A 612-amino-acid chain; its full sequence is Elongation factor 4 (612 aa).

The 183-residue stretch at 12–194 (SRIRNFSIIA…QIVEKVPAPS (183 aa)) folds into the tr-type G domain. GTP contacts are provided by residues 24–29 (DHGKST) and 141–144 (NKID).

The protein belongs to the TRAFAC class translation factor GTPase superfamily. Classic translation factor GTPase family. LepA subfamily.

It localises to the cell membrane. The catalysed reaction is GTP + H2O = GDP + phosphate + H(+). Required for accurate and efficient protein synthesis under certain stress conditions. May act as a fidelity factor of the translation reaction, by catalyzing a one-codon backward translocation of tRNAs on improperly translocated ribosomes. Back-translocation proceeds from a post-translocation (POST) complex to a pre-translocation (PRE) complex, thus giving elongation factor G a second chance to translocate the tRNAs correctly. Binds to ribosomes in a GTP-dependent manner. This chain is Elongation factor 4, found in Bacillus licheniformis (strain ATCC 14580 / DSM 13 / JCM 2505 / CCUG 7422 / NBRC 12200 / NCIMB 9375 / NCTC 10341 / NRRL NRS-1264 / Gibson 46).